A 488-amino-acid chain; its full sequence is Argininosuccinate lyase 2 (488 aa).

Belongs to the lyase 1 family. Argininosuccinate lyase subfamily.

It localises to the cytoplasm. The enzyme catalyses 2-(N(omega)-L-arginino)succinate = fumarate + L-arginine. It functions in the pathway amino-acid biosynthesis; L-arginine biosynthesis; L-arginine from L-ornithine and carbamoyl phosphate: step 3/3. The protein is Argininosuccinate lyase 2 of Rhizobium meliloti (strain 1021) (Ensifer meliloti).